Consider the following 162-residue polypeptide: Caveolin-2 (162 aa).

The Cytoplasmic segment spans residues 1–86 (MGLESEKADV…FEISKYVLYK (86 aa)). Tyr19 carries the post-translational modification Phosphotyrosine. Ser20, Ser23, and Ser36 each carry phosphoserine. An intramembrane region (helical) is located at residues 87–107 (FLTFFLAIPLAFAAGILFAIL). Topologically, residues 108–162 (SCLHIWIIMPFVKTCLMVLPSVQTIWKSVTDVVIAPLCTSVGRSFSSVSLQLSQD) are cytoplasmic.

It belongs to the caveolin family. Monomer or homodimer. Interacts with CAV1; the interaction forms a stable heterooligomeric complex that is required for targeting to lipid rafts and for caveolae formation. Tyrosine phosphorylated forms do not form heterooligomers with the Tyr-19-phosphorylated form existing as a monomer or dimer. Interacts (tyrosine phosphorylated form) with the SH2 domain-containing proteins, RASA1, NCK1 and SRC. Interacts (tyrosine phosphorylated form) with INSR. Interacts (Tyr-19 phosphorylated form) with MAPK1 (phosphorylated form); the interaction, promoted by insulin, leads to nuclear location and MAPK1 activation. Interacts with STAT3; the interaction is increased on insulin-induced tyrosine phosphorylation leading to STAT activation. Phosphorylated on serine and tyrosine residues. CAV1 promotes phosphorylation on Ser-23 which then targets the complex to the plasma membrane, lipid rafts and caveolae. Phosphorylation on Ser-36 appears to modulate mitosis in endothelial cells. Phosphorylation on Tyr-19 is required for insulin-induced phosphorylation of MAPK1 and DNA binding of STAT3. Tyrosine phosphorylation is induced by both EGF and insulin.

The protein resides in the nucleus. It localises to the golgi apparatus membrane. It is found in the cell membrane. The protein localises to the membrane. Its subcellular location is the caveola. Its function is as follows. May act as a scaffolding protein within caveolar membranes. Interacts directly with G-protein alpha subunits and can functionally regulate their activity. Acts as an accessory protein in conjunction with CAV1 in targeting to lipid rafts and driving caveolae formation. The Ser-36 phosphorylated form has a role in modulating mitosis in endothelial cells. Positive regulator of cellular mitogenesis of the MAPK signaling pathway. Required for the insulin-stimulated nuclear translocation and activation of MAPK1 and STAT3, and the subsequent regulation of cell cycle progression. The polypeptide is Caveolin-2 (CAV2) (Echinops telfairi (Lesser hedgehog tenrec)).